We begin with the raw amino-acid sequence, 1537 residues long: Isocyanide synthase-NRPS hybrid crmA (1537 aa).

The interval 1-502 is isocyanide synthase domain; the sequence is MFHKEAGISH…CVKAGYAALF (502 aa). The tract at residues 351–391 is disordered; the sequence is PSVPVSPGMSSPSAASTSSSGASMQGSAATTPETHSPPTFT. Residues 352 to 381 show a composition bias toward low complexity; sequence SVPVSPGMSSPSAASTSSSGASMQGSAATT. Residues 382–391 are compositionally biased toward polar residues; the sequence is PETHSPPTFT. The tract at residues 573–752 is adenylation; that stretch reads EAINDPFCFL…GNLIPPREDW (180 aa). Positions 941–1019 constitute a Carrier domain; it reads SSAHSIEDNV…RLSAIIALLA (79 aa). Ser977 carries the post-translational modification O-(pantetheine 4'-phosphoryl)serine. The segment at 1293–1526 is transferase; that stretch reads RCLKTTMFLV…LEMLVTDEEF (234 aa).

It in the N-terminal section; belongs to the isocyanide synthase family. This sequence in the C-terminal section; belongs to the NRP synthetase family.

The protein operates within secondary metabolite biosynthesis. Functionally, isocyanide synthase-NRPS hybrid; part of the crm gene cluster that mediates the biosynthesis of a yet unidentified copper-responsive metabolite. Converts valine into valine isocyanide that then contributes to two distinct biosynthetic pathways under copper-limiting conditions. Reaction of valine isocyanide with the imine intermediate of festuclavine results in formation of the amide bond in fumivaline A. In addition, valine isocyanide contributes to biosynthesis of a family of acylated sugar alcohols, the D-mannitol-derived fumicicolins. CrmA and associated products inhibit microbial growth from copper-starved A.fumigatus. This chain is Isocyanide synthase-NRPS hybrid crmA, found in Aspergillus fumigatus (strain ATCC MYA-4609 / CBS 101355 / FGSC A1100 / Af293) (Neosartorya fumigata).